The chain runs to 100 residues: MSEKQNSRDHKRRLLAAKFELRRKLYKAFCKDPDLPSDMRDKHRYKLSKLPRNSSFARVRNRCISTGRPRSVSEFFRIYRIVFRGLASRGSLMGIKKSSW.

Belongs to the universal ribosomal protein uS14 family.

The protein localises to the mitochondrion. The polypeptide is Small ribosomal subunit protein uS14m (RPS14) (Brassica napus (Rape)).